The sequence spans 555 residues: Potassium-transporting ATPase potassium-binding subunit (555 aa).

10 consecutive transmembrane segments (helical) span residues isoleucine 2 to isoleucine 22, glutamine 60 to phenylalanine 80, isoleucine 130 to phenylalanine 150, valine 173 to threonine 193, methionine 246 to tyrosine 266, isoleucine 278 to glutamate 298, alanine 374 to valine 394, leucine 412 to leucine 432, leucine 483 to leucine 503, and glycine 525 to leucine 545.

This sequence belongs to the KdpA family. In terms of assembly, the system is composed of three essential subunits: KdpA, KdpB and KdpC.

Its subcellular location is the cell membrane. Its function is as follows. Part of the high-affinity ATP-driven potassium transport (or Kdp) system, which catalyzes the hydrolysis of ATP coupled with the electrogenic transport of potassium into the cytoplasm. This subunit binds the extracellular potassium ions and delivers the ions to the membrane domain of KdpB through an intramembrane tunnel. This Bacillus cereus (strain ZK / E33L) protein is Potassium-transporting ATPase potassium-binding subunit.